The sequence spans 177 residues: Transmembrane protein 190 (177 aa).

The signal sequence occupies residues 1-21 (MLGCGIPALGLLLLLQGSADG). At 22-81 (NGIQGFFYPWSCEGDIWDRESCGGQAAIDSPNLCLRLRCCYRNGVCYHQRPDENVRRKHM) the chain is on the extracellular side. The 41-residue stretch at 31–71 (WSCEGDIWDRESCGGQAAIDSPNLCLRLRCCYRNGVCYHQR) folds into the P-type domain. 3 disulfides stabilise this stretch: C33-C61, C43-C60, and C55-C67. The helical transmembrane segment at 82–102 (WALVWTCSGLLLLSCSICLFW) threads the bilayer. The Cytoplasmic portion of the chain corresponds to 103–177 (WAKRRDVLHM…EETEGEEEED (75 aa)). The interval 131-177 (KHRGTKKTPSTGSVPVALSKESRDVEGGTEGEGTEEGEETEGEEEED) is disordered. Over residues 157-177 (GGTEGEGTEEGEETEGEEEED) the composition is skewed to acidic residues.

Its subcellular location is the membrane. The sequence is that of Transmembrane protein 190 (TMEM190) from Homo sapiens (Human).